Here is a 257-residue protein sequence, read N- to C-terminus: Urease accessory protein UreD (257 aa).

The protein belongs to the UreD family. In terms of assembly, ureD, UreF and UreG form a complex that acts as a GTP-hydrolysis-dependent molecular chaperone, activating the urease apoprotein by helping to assemble the nickel containing metallocenter of UreC. The UreE protein probably delivers the nickel.

It is found in the cytoplasm. Functionally, required for maturation of urease via the functional incorporation of the urease nickel metallocenter. In Sporosarcina pasteurii (Bacillus pasteurii), this protein is Urease accessory protein UreD.